The following is a 488-amino-acid chain: Protein nucleotidyltransferase YdiU (488 aa).

Gly-91, Gly-93, Arg-94, Lys-114, Asp-126, Gly-127, Arg-177, and Arg-184 together coordinate ATP. Catalysis depends on Asp-253, which acts as the Proton acceptor. Asn-254 and Asp-263 together coordinate Mg(2+). An ATP-binding site is contributed by Asp-263.

It belongs to the SELO family. Mg(2+) is required as a cofactor. Mn(2+) serves as cofactor.

The enzyme catalyses L-seryl-[protein] + ATP = 3-O-(5'-adenylyl)-L-seryl-[protein] + diphosphate. The catalysed reaction is L-threonyl-[protein] + ATP = 3-O-(5'-adenylyl)-L-threonyl-[protein] + diphosphate. It catalyses the reaction L-tyrosyl-[protein] + ATP = O-(5'-adenylyl)-L-tyrosyl-[protein] + diphosphate. It carries out the reaction L-histidyl-[protein] + UTP = N(tele)-(5'-uridylyl)-L-histidyl-[protein] + diphosphate. The enzyme catalyses L-seryl-[protein] + UTP = O-(5'-uridylyl)-L-seryl-[protein] + diphosphate. The catalysed reaction is L-tyrosyl-[protein] + UTP = O-(5'-uridylyl)-L-tyrosyl-[protein] + diphosphate. Its function is as follows. Nucleotidyltransferase involved in the post-translational modification of proteins. It can catalyze the addition of adenosine monophosphate (AMP) or uridine monophosphate (UMP) to a protein, resulting in modifications known as AMPylation and UMPylation. This chain is Protein nucleotidyltransferase YdiU, found in Bacillus cereus (strain ATCC 10987 / NRS 248).